The following is a 161-amino-acid chain: NADH-quinone oxidoreductase subunit I (161 aa).

4Fe-4S ferredoxin-type domains lie at 52–82 and 92–121; these read LRRY…IESS and TRYD…QGPN. Cys62, Cys65, Cys68, Cys72, Cys101, Cys104, Cys107, and Cys111 together coordinate [4Fe-4S] cluster.

The protein belongs to the complex I 23 kDa subunit family. NDH-1 is composed of 14 different subunits. Subunits NuoA, H, J, K, L, M, N constitute the membrane sector of the complex. The cofactor is [4Fe-4S] cluster.

It localises to the cell inner membrane. It carries out the reaction a quinone + NADH + 5 H(+)(in) = a quinol + NAD(+) + 4 H(+)(out). In terms of biological role, NDH-1 shuttles electrons from NADH, via FMN and iron-sulfur (Fe-S) centers, to quinones in the respiratory chain. The immediate electron acceptor for the enzyme in this species is believed to be ubiquinone. Couples the redox reaction to proton translocation (for every two electrons transferred, four hydrogen ions are translocated across the cytoplasmic membrane), and thus conserves the redox energy in a proton gradient. The polypeptide is NADH-quinone oxidoreductase subunit I (Pelagibacter ubique (strain HTCC1062)).